We begin with the raw amino-acid sequence, 535 residues long: Methylmalonate-semialdehyde/malonate-semialdehyde dehydrogenase [acylating], mitochondrial (535 aa).

The transit peptide at 1-32 (MAAAVAAAAAMRSRILQVSSKVNATWYPASSF) directs the protein to the mitochondrion. 4 positions are modified to N6-acetyllysine; alternate: Lys-47, Lys-52, Lys-55, and Lys-76. An N6-succinyllysine; alternate mark is found at Lys-47, Lys-52, Lys-55, and Lys-76. Lys-87 carries the N6-acetyllysine modification. Lys-117 and Lys-129 each carry N6-acetyllysine; alternate. Lys-117 and Lys-129 each carry N6-succinyllysine; alternate. Residues Ala-183, Phe-185, Lys-209, Glu-212, Arg-213, and Ser-262 each contribute to the NAD(+) site. The residue at position 262 (Ser-262) is a Phosphoserine. Lys-298 carries the post-translational modification N6-acetyllysine. Catalysis depends on Cys-317, which acts as the Nucleophile. An N6-acetyllysine mark is found at Lys-330 and Lys-331. Residues Lys-364 and Lys-376 each carry the N6-acetyllysine; alternate modification. 2 positions are modified to N6-succinyllysine; alternate: Lys-364 and Lys-376. Position 380 is a phosphoserine (Ser-380). Lys-391 bears the N6-succinyllysine mark. Glu-417 is a binding site for NAD(+). The residue at position 500 (Lys-500) is an N6-acetyllysine. Lys-517 bears the N6-succinyllysine mark.

Belongs to the aldehyde dehydrogenase family. As to quaternary structure, homotetramer. Post-translationally, acetylation of Lys-55; Lys-117 and Lys-331 is observed in liver mitochondria from fasted mice but not from fed mice.

It localises to the mitochondrion. It catalyses the reaction 3-oxopropanoate + NAD(+) + CoA + H2O = hydrogencarbonate + acetyl-CoA + NADH + H(+). It carries out the reaction 2-methyl-3-oxopropanoate + NAD(+) + CoA + H2O = propanoyl-CoA + hydrogencarbonate + NADH + H(+). The catalysed reaction is (R)-2-methyl-3-oxopropanoate + NAD(+) + CoA + H2O = propanoyl-CoA + hydrogencarbonate + NADH + H(+). The enzyme catalyses (S)-2-methyl-3-oxopropanoate + NAD(+) + CoA + H2O = propanoyl-CoA + hydrogencarbonate + NADH + H(+). Functionally, malonate and methylmalonate semialdehyde dehydrogenase involved in the catabolism of valine, thymine, and compounds catabolized by way of beta-alanine, including uracil and cytidine. This chain is Methylmalonate-semialdehyde/malonate-semialdehyde dehydrogenase [acylating], mitochondrial, found in Mus musculus (Mouse).